The primary structure comprises 376 residues: MFTFIRSNLNNLKAYTPHSAGSSEILLDRLDTNECPYDLPDNLKQKLAENYQQLIETNRYPDGSHLKLKEAIAKYVNEVTPSANISANNISVGNGSDELIRSLLIVTCVGGEGSILTATPTFSMYSILAQTLGIPVVNVGRKESNFEIDITAAEDAINHTKNPSIKAIFVVHPNSPTANALNSQELVWLRSLPDDILVVIDEAYFEFSQTSLAEELNQHPNWVILRTFSKAFRLASLRVGYAIAHPEIIINLEKVRLPYNLPSFSQAAAQLVLNHSQHLLSFIPEILRERSKLFATFGEIPALKVWKSAANFLYMRLTDEGLKLMGKSSQDQSLSSLMQRLKTQGTLIRHTGGGLRITIGTSEENQRTVERIKGIF.

At Lys-230 the chain carries N6-(pyridoxal phosphate)lysine.

Belongs to the class-II pyridoxal-phosphate-dependent aminotransferase family. Histidinol-phosphate aminotransferase subfamily. As to quaternary structure, homodimer. It depends on pyridoxal 5'-phosphate as a cofactor.

The enzyme catalyses L-histidinol phosphate + 2-oxoglutarate = 3-(imidazol-4-yl)-2-oxopropyl phosphate + L-glutamate. Its pathway is amino-acid biosynthesis; L-histidine biosynthesis; L-histidine from 5-phospho-alpha-D-ribose 1-diphosphate: step 7/9. This Trichodesmium erythraeum (strain IMS101) protein is Histidinol-phosphate aminotransferase.